Here is a 161-residue protein sequence, read N- to C-terminus: 6,7-dimethyl-8-ribityllumazine synthase (161 aa).

5-amino-6-(D-ribitylamino)uracil-binding positions include tryptophan 31, 63–65 (SFE), and 85–87 (VVI). A (2S)-2-hydroxy-3-oxobutyl phosphate-binding site is contributed by 90–91 (GT). Catalysis depends on histidine 93, which acts as the Proton donor. Phenylalanine 118 contacts 5-amino-6-(D-ribitylamino)uracil. Arginine 132 provides a ligand contact to (2S)-2-hydroxy-3-oxobutyl phosphate.

Belongs to the DMRL synthase family.

It carries out the reaction (2S)-2-hydroxy-3-oxobutyl phosphate + 5-amino-6-(D-ribitylamino)uracil = 6,7-dimethyl-8-(1-D-ribityl)lumazine + phosphate + 2 H2O + H(+). Its pathway is cofactor biosynthesis; riboflavin biosynthesis; riboflavin from 2-hydroxy-3-oxobutyl phosphate and 5-amino-6-(D-ribitylamino)uracil: step 1/2. Functionally, catalyzes the formation of 6,7-dimethyl-8-ribityllumazine by condensation of 5-amino-6-(D-ribitylamino)uracil with 3,4-dihydroxy-2-butanone 4-phosphate. This is the penultimate step in the biosynthesis of riboflavin. The chain is 6,7-dimethyl-8-ribityllumazine synthase from Arthrobacter sp. (strain FB24).